We begin with the raw amino-acid sequence, 542 residues long: Zinc finger CCHC domain-containing protein 7 (542 aa).

The tract at residues 110–144 (QAQEKTQSPATPRSNKVANKCKRSNKKPEPEESPS) is disordered. A compositionally biased stretch (polar residues) spans 112–126 (QEKTQSPATPRSNKV). Residues K129 and K136 each participate in a glycyl lysine isopeptide (Lys-Gly) (interchain with G-Cter in SUMO2) cross-link. Phosphoserine is present on S142. Glycyl lysine isopeptide (Lys-Gly) (interchain with G-Cter in SUMO2) cross-links involve residues K236 and K251. 3 CCHC-type zinc fingers span residues 238–255 (VTCR…NCPL), 260–277 (RPCC…GCPA), and 301–318 (KRCD…ACPE). Residue K336 forms a Glycyl lysine isopeptide (Lys-Gly) (interchain with G-Cter in SUMO2) linkage. The CCHC-type 4 zinc finger occupies 345–362 (VYCYNCAQKGHYGHECTE). Positions 396–542 (LKDIKKNGDF…RKKKPKSSGF (147 aa)) are disordered. Residue K410 forms a Glycyl lysine isopeptide (Lys-Gly) (interchain with G-Cter in SUMO2) linkage. Over residues 412-421 (PHGEETDRYH) the composition is skewed to basic and acidic residues. The span at 422–435 (HDRRKSRFSGKRSR) shows a compositional bias: basic residues. A Glycyl lysine isopeptide (Lys-Gly) (interchain with G-Cter in SUMO2) cross-link involves residue K432. Over residues 436 to 456 (WPRESKETQKEKTRGREGEKH) the composition is skewed to basic and acidic residues. K474 is covalently cross-linked (Glycyl lysine isopeptide (Lys-Gly) (interchain with G-Cter in SUMO2)). Residues 474–489 (KPNSSSSSNSQKPSKS) show a composition bias toward low complexity. Residues S478 and S480 each carry the phosphoserine modification. Residues K485 and K488 each participate in a glycyl lysine isopeptide (Lys-Gly) (interchain with G-Cter in SUMO2) cross-link. Basic and acidic residues-rich tracts occupy residues 499–510 (LREEKLRRESMR) and 518–528 (FVEDGSHDDLF). K531 is covalently cross-linked (Glycyl lysine isopeptide (Lys-Gly) (interchain with G-Cter in SUMO2)). Basic residues predominate over residues 531–542 (KQRKKKPKSSGF).

Component of a nucleolar TRAMP-like complex, an ATP-dependent exosome regulatory complex consisting of a helicase (MTREX), an oligadenylate polymerase (TENT4B or TENT4A), and a substrate specific RNA-binding factor (ZCCHC7 or ZCCHC8). Several TRAMP-like complexes exist with specific compositions and are associated with nuclear, or nucleolar RNA exosomes.

It localises to the nucleus. Its subcellular location is the nucleolus. This chain is Zinc finger CCHC domain-containing protein 7 (Zcchc7), found in Rattus norvegicus (Rat).